The sequence spans 320 residues: Cytochrome f (320 aa).

The N-terminal stretch at 1-35 is a signal peptide; the sequence is MQNRNTFSWVKEQMTRSISVSIIIYVITRTSISNA. Heme contacts are provided by Y36, C56, C59, and H60. The chain crosses the membrane as a helical span at residues 286 to 306; the sequence is VQGLLFFLASIILAQIFLVLK.

The protein belongs to the cytochrome f family. As to quaternary structure, the 4 large subunits of the cytochrome b6-f complex are cytochrome b6, subunit IV (17 kDa polypeptide, petD), cytochrome f and the Rieske protein, while the 4 small subunits are PetG, PetL, PetM and PetN. The complex functions as a dimer. The cofactor is heme.

It is found in the plastid. It localises to the chloroplast thylakoid membrane. In terms of biological role, component of the cytochrome b6-f complex, which mediates electron transfer between photosystem II (PSII) and photosystem I (PSI), cyclic electron flow around PSI, and state transitions. This is Cytochrome f from Chloranthus spicatus (Chulantree).